A 49-amino-acid polypeptide reads, in one-letter code: Large ribosomal subunit protein bL33 (49 aa).

This sequence belongs to the bacterial ribosomal protein bL33 family.

This Streptococcus gordonii (strain Challis / ATCC 35105 / BCRC 15272 / CH1 / DL1 / V288) protein is Large ribosomal subunit protein bL33.